The chain runs to 155 residues: Cardio acceleratory peptide 2b (155 aa).

A signal peptide spans 1-26; sequence MKAIFSLYNIVSAILLLVLLAEFSTA. Positions 27–33 are excised as a propeptide; it reads ELNHDKN. At Val47 the chain carries Valine amide. Residues 50 to 85 constitute a propeptide that is removed on maturation; that stretch reads SDPSLANSLRDASDAAVFDGLYGDASQEDYNEADYQ. Valine amide is present on Val96. The propeptide occupies 99 to 117; sequence SDAELRKFAHLLALQQVLD. Residue Leu134 is modified to Leucine amide. A propeptide spanning residues 138-155 is cleaved from the precursor; it reads SVDAKAFSDASKGQQEFN.

It belongs to the pyrokinin family.

It is found in the secreted. CAP-1 and CAP-2, but not CAP-3 are ligands for the Capa receptor. CAP-1 and CAP-2 are probably components of the signal transduction pathway that leads to Malpighian tubule fluid secretion via the second messenger nitric oxide. This Drosophila pseudoobscura pseudoobscura (Fruit fly) protein is Cardio acceleratory peptide 2b.